Reading from the N-terminus, the 661-residue chain is WD repeat-containing protein 26 (661 aa).

Over residues 1–27 (MQANGAGGGGGGGGGGGGGGGGGGGQG) the composition is skewed to gly residues. 2 disordered regions span residues 1 to 70 (MQAN…ASNN) and 99 to 118 (TAASSSLATPELGSSLKKKK). 2 stretches are compositionally biased toward low complexity: residues 56-70 (ANGLLPSAPSAASNN) and 99-113 (TAASSSLATPELGSS). Phosphoserine occurs at positions 121 and 123. The region spanning 123 to 155 (SDEDVIRLIGQHLNGLGLNQTVDLLMQESGCRL) is the LisH domain. A CTLH domain is found at 156–231 (EHPSATKFRN…EYLEDGKVLE (76 aa)). 6 WD repeats span residues 353-392 (EHCNEVWFCKFSNDGTKLATGSKDTTVIIWQVDPDTHLLK), 399-438 (GHAYGVSYIAWSPDDNYLVACGPDDCSELWLWNVQTGELR), 444-484 (SHED…DSWE), 524-563 (QEDHPIMSFTISKNGRLALLNVATQGVHLWDLQDRVLVRK), 566-608 (GVTQ…PIAE), and 611-651 (GHTR…DHQN).

As to quaternary structure, forms homooligomers. Identified in the CTLH complex that contains GID4, RANBP9 and/or RANBP10, MKLN1, MAEA, RMND5A (or alternatively its paralog RMND5B), GID8, ARMC8, WDR26 and YPEL5. Within this complex, MAEA, RMND5A (or alternatively its paralog RMND5B), GID8, WDR26, and RANBP9 and/or RANBP10 form the catalytic core, while GID4, MKLN1, ARMC8 and YPEL5 have ancillary roles. Interacts with DDB1-CUL4A/B E3 ligase complexes. Forms a complex composed of at least WDR26, a G-beta:gamma unit, and PLCB2. Interacts with AXIN1. In terms of tissue distribution, broadly expressed, with highest levels in heart and skeletal muscle.

It localises to the cytoplasm. Its subcellular location is the nucleus. The protein localises to the mitochondrion. In terms of biological role, G-beta-like protein involved in cell signal transduction. Acts as a negative regulator in MAPK signaling pathway. Functions as a scaffolding protein to promote G beta:gamma-mediated PLCB2 plasma membrane translocation and subsequent activation in leukocytes. Core component of the CTLH E3 ubiquitin-protein ligase complex that selectively accepts ubiquitin from UBE2H and mediates ubiquitination and subsequent proteasomal degradation of the transcription factor HBP1. Acts as a negative regulator of the canonical Wnt signaling pathway through preventing ubiquitination of beta-catenin CTNNB1 by the beta-catenin destruction complex, thus negatively regulating CTNNB1 degradation. Serves as a scaffold to coordinate PI3K/AKT pathway-driven cell growth and migration. Protects cells from oxidative stress-induced apoptosis via the down-regulation of AP-1 transcriptional activity as well as by inhibiting cytochrome c release from mitochondria. Also protects cells by promoting hypoxia-mediated autophagy and mitophagy. In Homo sapiens (Human), this protein is WD repeat-containing protein 26 (WDR26).